Here is a 193-residue protein sequence, read N- to C-terminus: uncharacterized protein (193 aa).

Residue Arg8 coordinates substrate. The active-site Tele-phosphohistidine intermediate is His9. Positions 15, 21, and 58 each coordinate substrate. The active-site Proton donor/acceptor is the Glu82. His139 provides a ligand contact to substrate.

The protein belongs to the phosphoglycerate mutase family. GpmB subfamily.

Functionally, phosphatase with broad substrate specificity. Does not have phosphoglycerate mutase activity. This is an uncharacterized protein from Bacillus subtilis (strain 168).